Here is a 204-residue protein sequence, read N- to C-terminus: Large ribosomal subunit protein uL4 (204 aa).

Positions 47–69 (KAQKNRAAVSGGGKKPWRQKGTG) are disordered.

It belongs to the universal ribosomal protein uL4 family. As to quaternary structure, part of the 50S ribosomal subunit.

Its function is as follows. One of the primary rRNA binding proteins, this protein initially binds near the 5'-end of the 23S rRNA. It is important during the early stages of 50S assembly. It makes multiple contacts with different domains of the 23S rRNA in the assembled 50S subunit and ribosome. Forms part of the polypeptide exit tunnel. This chain is Large ribosomal subunit protein uL4, found in Teredinibacter turnerae (strain ATCC 39867 / T7901).